Here is a 1222-residue protein sequence, read N- to C-terminus: ATP-dependent helicase/nuclease subunit A (1222 aa).

A UvrD-like helicase ATP-binding domain is found at 39–495 (QKRTAQQIEA…ILLKENFRSQ (457 aa)). 60-67 (ASAGSGKT) contacts ATP. One can recognise a UvrD-like helicase C-terminal domain in the interval 524-810 (QLIAGSHAQT…NLMTIHKSKG (287 aa)).

This sequence belongs to the helicase family. AddA subfamily. In terms of assembly, heterodimer of AddA and AddB/RexB. Mg(2+) is required as a cofactor.

The catalysed reaction is Couples ATP hydrolysis with the unwinding of duplex DNA by translocating in the 3'-5' direction.. The enzyme catalyses ATP + H2O = ADP + phosphate + H(+). Functionally, the heterodimer acts as both an ATP-dependent DNA helicase and an ATP-dependent, dual-direction single-stranded exonuclease. Recognizes the chi site generating a DNA molecule suitable for the initiation of homologous recombination. The AddA nuclease domain is required for chi fragment generation; this subunit has the helicase and 3' -&gt; 5' nuclease activities. This is ATP-dependent helicase/nuclease subunit A from Streptococcus pyogenes serotype M3 (strain ATCC BAA-595 / MGAS315).